Here is a 215-residue protein sequence, read N- to C-terminus: Probable nicotinate-nucleotide adenylyltransferase (215 aa).

This sequence belongs to the NadD family.

It catalyses the reaction nicotinate beta-D-ribonucleotide + ATP + H(+) = deamido-NAD(+) + diphosphate. It participates in cofactor biosynthesis; NAD(+) biosynthesis; deamido-NAD(+) from nicotinate D-ribonucleotide: step 1/1. Catalyzes the reversible adenylation of nicotinate mononucleotide (NaMN) to nicotinic acid adenine dinucleotide (NaAD). This Coxiella burnetii (strain Dugway 5J108-111) protein is Probable nicotinate-nucleotide adenylyltransferase.